A 246-amino-acid chain; its full sequence is Bis(5'-nucleosyl)-tetraphosphatase PrpE [asymmetrical] (246 aa).

The protein belongs to the PrpE family. It depends on Ni(2+) as a cofactor.

It carries out the reaction P(1),P(4)-bis(5'-guanosyl) tetraphosphate + H2O = GMP + GTP + 2 H(+). Functionally, asymmetrically hydrolyzes Ap4p to yield AMP and ATP. The polypeptide is Bis(5'-nucleosyl)-tetraphosphatase PrpE [asymmetrical] (Bacillus cereus (strain ATCC 10987 / NRS 248)).